An 853-amino-acid polypeptide reads, in one-letter code: DNA mismatch repair protein MutS (853 aa).

614–621 (GPNMGGKS) contributes to the ATP binding site.

This sequence belongs to the DNA mismatch repair MutS family.

Its function is as follows. This protein is involved in the repair of mismatches in DNA. It is possible that it carries out the mismatch recognition step. This protein has a weak ATPase activity. The chain is DNA mismatch repair protein MutS from Escherichia coli O127:H6 (strain E2348/69 / EPEC).